A 61-amino-acid polypeptide reads, in one-letter code: Alpha-conotoxine-like Am1.3 (61 aa).

The first 21 residues, 1–21, serve as a signal peptide directing secretion; sequence MGMRMMFTVFLLVVLATTVVS. Residues 22–44 constitute a propeptide that is removed on maturation; sequence FMSGRASHGRNAAASDLIALTIK. At C60 the chain carries Cysteine amide.

This sequence belongs to the conotoxin A superfamily. In terms of processing, is not hydroxylated. Post-translationally, contains 2 disulfide bonds. Expressed by the venom duct.

The protein localises to the secreted. Functionally, alpha-conotoxins act on postsynaptic membranes, they bind to the nicotinic acetylcholine receptors (nAChR) and thus inhibit them. This is Alpha-conotoxine-like Am1.3 from Conus amadis (Amadis cone).